The primary structure comprises 557 residues: Kelch repeat and BTB domain-containing protein 2 (557 aa).

A BTB domain is found at 26-95 (CDVIITIGDG…LYNRHISSMN (70 aa)). The region spanning 133–223 (HKLYEMVHIP…CIDIQNLDKK (91 aa)) is the BACK domain. Kelch repeat units follow at residues 305-352 (EIII…VIDD), 353-399 (TIYA…VLDQ), and 401-464 (IYII…SHKD).

As to quaternary structure, interacts (via BTB domain) with host CUL3.

The protein resides in the host cytoplasm. Functionally, probable substrate-specific adapter of CUL3-containing E3 ubiquitin-protein ligases which mediate the ubiquitination and subsequent proteasomal degradation of host target proteins. The chain is Kelch repeat and BTB domain-containing protein 2 (KBTB2) from Bos taurus (Bovine).